The primary structure comprises 817 residues: Ribonuclease R 1 (817 aa).

Positions 259–584 (RVDYRNEITF…DLLVHRLIRE (326 aa)) constitute an RNB domain. The 81-residue stretch at 637–717 (GEEYEGIIAS…MTGEIDFEYL (81 aa)) folds into the S1 motif domain. Residues 728–817 (AKAKKKPDHK…DGRKKPHKRG (90 aa)) form a disordered region. Residues 729–742 (KAKKKPDHKGRKKS) show a composition bias toward basic residues. 2 stretches are compositionally biased toward basic and acidic residues: residues 767–777 (RRADEKFEFDK) and 795–810 (KFTDKKDNGKKFTDGR).

This sequence belongs to the RNR ribonuclease family. RNase R subfamily.

It is found in the cytoplasm. The enzyme catalyses Exonucleolytic cleavage in the 3'- to 5'-direction to yield nucleoside 5'-phosphates.. In terms of biological role, 3'-5' exoribonuclease that releases 5'-nucleoside monophosphates and is involved in maturation of structured RNAs. This is Ribonuclease R 1 (rnr1) from Lactococcus lactis subsp. lactis (strain IL1403) (Streptococcus lactis).